A 164-amino-acid chain; its full sequence is UPF0178 protein RPD_2254 (164 aa).

The protein belongs to the UPF0178 family.

This chain is UPF0178 protein RPD_2254, found in Rhodopseudomonas palustris (strain BisB5).